A 386-amino-acid chain; its full sequence is DNA methyltransferase CcrM (386 aa).

Residues 280-382 (LGKAELTVMT…LRKIIREQMA (103 aa)) enclose the RAMA domain.

This sequence belongs to the N(4)/N(6)-methyltransferase family.

It carries out the reaction a 2'-deoxyadenosine in DNA + S-adenosyl-L-methionine = an N(6)-methyl-2'-deoxyadenosine in DNA + S-adenosyl-L-homocysteine + H(+). Functionally, a beta subtype methylase that recognizes the double-stranded sequence 5'-GANTC-3' and methylates A-2 on both strands. CcrM-mediated methylation has important cellular functions. Contributes to the accurate cell-cycle control of DNA replication and cellular morphology. This is DNA methyltransferase CcrM (ccrM) from Brucella ovis (strain ATCC 25840 / 63/290 / NCTC 10512).